Consider the following 72-residue polypeptide: Large ribosomal subunit protein uL29 (72 aa).

The protein belongs to the universal ribosomal protein uL29 family.

The protein is Large ribosomal subunit protein uL29 of Chlamydia caviae (strain ATCC VR-813 / DSM 19441 / 03DC25 / GPIC) (Chlamydophila caviae).